The chain runs to 486 residues: N-succinylglutamate 5-semialdehyde dehydrogenase (486 aa).

220–225 (GSSRTG) contributes to the NAD(+) binding site. Catalysis depends on residues Glu243 and Cys277.

The protein belongs to the aldehyde dehydrogenase family. AstD subfamily.

It catalyses the reaction N-succinyl-L-glutamate 5-semialdehyde + NAD(+) + H2O = N-succinyl-L-glutamate + NADH + 2 H(+). Its pathway is amino-acid degradation; L-arginine degradation via AST pathway; L-glutamate and succinate from L-arginine: step 4/5. Catalyzes the NAD-dependent reduction of succinylglutamate semialdehyde into succinylglutamate. The polypeptide is N-succinylglutamate 5-semialdehyde dehydrogenase (Shewanella halifaxensis (strain HAW-EB4)).